A 377-amino-acid polypeptide reads, in one-letter code: RIB43A-like with coiled-coils protein 2 (377 aa).

The stretch at 188 to 238 (ELKFDEAARDLQRLEITTRKAVCAAVKEFNKKQVVELAERKRQVKQQEQED) forms a coiled coil. Residues 355–377 (QLDAAPSSQPTEDYFSQFNTRSR) are disordered. Residues 360–377 (PSSQPTEDYFSQFNTRSR) show a composition bias toward polar residues.

The protein belongs to the RIB43A family. As to quaternary structure, microtubule inner protein component of sperm flagellar doublet microtubules.

The protein localises to the cytoplasm. Its subcellular location is the cytoskeleton. It localises to the cilium axoneme. The protein resides in the flagellum axoneme. Microtubule inner protein (MIP) part of the dynein-decorated doublet microtubules (DMTs) in cilia axoneme, which is required for motile cilia beating. This is RIB43A-like with coiled-coils protein 2 from Rattus norvegicus (Rat).